Here is a 932-residue protein sequence, read N- to C-terminus: 2-oxoglutarate dehydrogenase E1 component (932 aa).

Belongs to the alpha-ketoglutarate dehydrogenase family. In terms of assembly, homodimer. Part of the 2-oxoglutarate dehydrogenase (OGDH) complex composed of E1 (2-oxoglutarate dehydrogenase), E2 (dihydrolipoamide succinyltransferase) and E3 (dihydrolipoamide dehydrogenase); the complex contains multiple copies of the three enzymatic components (E1, E2 and E3). Requires thiamine diphosphate as cofactor.

It carries out the reaction N(6)-[(R)-lipoyl]-L-lysyl-[protein] + 2-oxoglutarate + H(+) = N(6)-[(R)-S(8)-succinyldihydrolipoyl]-L-lysyl-[protein] + CO2. E1 component of the 2-oxoglutarate dehydrogenase (OGDH) complex which catalyzes the decarboxylation of 2-oxoglutarate, the first step in the conversion of 2-oxoglutarate to succinyl-CoA and CO(2). This is 2-oxoglutarate dehydrogenase E1 component from Staphylococcus aureus (strain MRSA252).